The following is a 108-amino-acid chain: DNA-binding protein HBbu (108 aa).

This sequence belongs to the bacterial histone-like protein family.

In terms of biological role, histone-like DNA-binding protein which is capable of wrapping DNA to stabilize it, and thus to prevent its denaturation under extreme environmental conditions. The polypeptide is DNA-binding protein HBbu (hbb) (Borreliella japonica (Borrelia japonica)).